Reading from the N-terminus, the 697-residue chain is uncharacterized protein (697 aa).

Residues 516–545 are a coiled coil; sequence ADQSQNDVVALSSRIDRLTQEVVALQNSEK.

This is an uncharacterized protein from Callospermophilus lateralis (Golden-mantled ground squirrel).